A 1710-amino-acid polypeptide reads, in one-letter code: Chromodomain-helicase-DNA-binding protein 1 (1710 aa).

Residues 1–10 (MNGHSDEESV) show a composition bias toward basic and acidic residues. Positions 1-252 (MNGHSDEESV…KEDEEMKTDS (252 aa)) are disordered. Over residues 35 to 63 (SSGSSSDGSSSQSGSSDSDSGSESGSQSE) the composition is skewed to low complexity. Over residues 67–85 (DTSRENKVQAKPPKVDGAE) the composition is skewed to basic and acidic residues. The segment covering 105–121 (QQQQQQQQQHQASSNSG) has biased composition (low complexity). Acidic residues predominate over residues 122 to 136 (SEEDSSSSEDSDDSS). Residues 152 to 163 (SGSGSPSQSGSD) are compositionally biased toward low complexity. Over residues 187–210 (KVKSRKPQNRSKSKNGKKILGQKK) the composition is skewed to basic residues. Phosphoserine occurs at positions 215 and 216. Residues 215-226 (SSEEDDDEEDYD) are compositionally biased toward acidic residues. At Thr-237 the chain carries Phosphothreonine. The residue at position 241 (Ser-241) is a Phosphoserine. Phosphothreonine is present on Thr-250. Position 252 is a phosphoserine (Ser-252). Chromo domains follow at residues 272–364 (ETIE…RWLK) and 389–452 (QIVE…TPFK). A Phosphoserine modification is found at Ser-471. The Helicase ATP-binding domain occupies 493–663 (AHSWCKGNSC…WSLLHFIMPE (171 aa)). Residue 506 to 513 (DEMGLGKT) coordinates ATP. Residues 614-617 (DEAH) carry the DEAH box motif. The 152-residue stretch at 792–943 (LLDKLLIRLR…HLVIQRMDTT (152 aa)) folds into the Helicase C-terminal domain. 8 positions are modified to phosphoserine: Ser-1025, Ser-1040, Ser-1081, Ser-1085, Ser-1096, Ser-1098, Ser-1100, and Ser-1102. The segment at 1080 to 1120 (ISFNGSEGRRSRSRRYSGSDSDSISEGKRPKKRGRPRTIPR) is disordered. Basic residues predominate over residues 1108 to 1117 (RPKKRGRPRT). At Ser-1161 the chain carries Phosphoserine. Disordered stretches follow at residues 1321-1408 (EALS…ESEE) and 1502-1710 (KKRQ…SRKT). The span at 1329–1345 (SKRRKARAKKNKAMKSI) shows a compositional bias: basic residues. Residues Ser-1353, Ser-1355, Ser-1356, Ser-1360, Ser-1363, Ser-1371, and Ser-1373 each carry the phosphoserine modification. The segment covering 1370 to 1379 (LSESKSDGRE) has biased composition (basic and acidic residues). The tract at residues 1409–1511 (LDQKTFSICK…KKRQESQQNS (103 aa)) is CHD1 helical C-terminal domain (CHCT). Low complexity predominate over residues 1507–1516 (SQQNSDQNSN). Basic and acidic residues-rich tracts occupy residues 1523–1573 (RNPD…DSRK) and 1582–1670 (GKDH…DHRA). Ser-1622 is modified (phosphoserine). Repeat copies occupy residues 1628 to 1632 (HSDHR), 1634 to 1638 (HSDHR), and 1640 to 1644 (HSDHR). A 3 X 5 AA repeats of H-S-D-H-R region spans residues 1628 to 1644 (HSDHRSHSDHRLHSDHR). Ser-1677, Arg-1688, and Ser-1689 each carry phosphoserine. Residues 1690–1701 (PFEHSVEHKSTP) are compositionally biased toward basic and acidic residues.

It belongs to the SNF2/RAD54 helicase family. Component of the SAGA complex. Interacts with BCLAF1, NCoR, SRP20 and SAFB. Specifically interacts with methylated H3K4me2 and H3K4me3. Interacts with the FACT complex, the PAF complex and the U2 snRNP. Interacts directly with PAF1, SFA3A1, SFA3A2, SFA3A3, SNF2 and SSRP1. As to expression, expressed in many tissues including in the brain, where the highest level of expression is found in the cerebellum and basal ganglia.

It is found in the nucleus. The protein localises to the cytoplasm. It carries out the reaction ATP + H2O = ADP + phosphate + H(+). Its function is as follows. ATP-dependent chromatin-remodeling factor which functions as substrate recognition component of the transcription regulatory histone acetylation (HAT) complex SAGA. Regulates polymerase II transcription. Also required for efficient transcription by RNA polymerase I, and more specifically the polymerase I transcription termination step. Regulates negatively DNA replication. Not only involved in transcription-related chromatin-remodeling, but also required to maintain a specific chromatin configuration across the genome. Is also associated with histone deacetylase (HDAC) activity. Required for the bridging of SNF2, the FACT complex, the PAF complex as well as the U2 snRNP complex to H3K4me3. Functions to modulate the efficiency of pre-mRNA splicing in part through physical bridging of spliceosomal components to H3K4me3. Required for maintaining open chromatin and pluripotency in embryonic stem cells. This Homo sapiens (Human) protein is Chromodomain-helicase-DNA-binding protein 1.